We begin with the raw amino-acid sequence, 467 residues long: Serine/threonine-protein kinase AFC1 (467 aa).

The 329-residue stretch at Tyr-115–Phe-443 folds into the Protein kinase domain. ATP is bound by residues Met-121–Val-129 and Lys-144. The Proton acceptor role is filled by Asp-240. A disordered region spans residues Arg-447 to Asn-467.

The protein belongs to the protein kinase superfamily. CMGC Ser/Thr protein kinase family. Lammer subfamily.

The catalysed reaction is L-seryl-[protein] + ATP = O-phospho-L-seryl-[protein] + ADP + H(+). It catalyses the reaction L-threonyl-[protein] + ATP = O-phospho-L-threonyl-[protein] + ADP + H(+). The enzyme catalyses L-tyrosyl-[protein] + ATP = O-phospho-L-tyrosyl-[protein] + ADP + H(+). Activator of yeast transcription factor, STE12. The chain is Serine/threonine-protein kinase AFC1 (AFC1) from Arabidopsis thaliana (Mouse-ear cress).